A 378-amino-acid polypeptide reads, in one-letter code: Merozoite surface protein P41 (378 aa).

The signal sequence occupies residues 1-20 (MKGVIFCLVVLLWRQAWVSS). In terms of domain architecture, 6-Cys 1 spans 21–133 (KSHKCDFTKE…LKINRFLKDD (113 aa)). 3 cysteine pairs are disulfide-bonded: C25–C42, C56–C113, and C64–C111. N77, N149, N182, and N205 each carry an N-linked (GlcNAc...) asparagine glycan. A 6-Cys 2 domain is found at 241 to 375 (VIKGCDFGNN…GESEVVLNSF (135 aa)). Cystine bridges form between C245–C270, C284–C348, and C297–C346. The N-linked (GlcNAc...) asparagine glycan is linked to N351.

In terms of assembly, heterodimer; heterodimerizes with PF12. May form an antiparallel heterodimer with PF12. Processed into a soluble form.

Its subcellular location is the cell surface. The protein localises to the cell membrane. The protein is Merozoite surface protein P41 (PF41) of Plasmodium falciparum (isolate 3D7).